A 430-amino-acid chain; its full sequence is Histidinol dehydrogenase (430 aa).

NAD(+) is bound by residues Tyr124, Gln185, and Asn208. The substrate site is built by Ser233, Gln255, and His258. Zn(2+) contacts are provided by Gln255 and His258. Active-site proton acceptor residues include Glu324 and His325. Substrate contacts are provided by His325, Asp358, Glu412, and His418. Asp358 contacts Zn(2+). Residue His418 participates in Zn(2+) binding.

Belongs to the histidinol dehydrogenase family. Requires Zn(2+) as cofactor.

The catalysed reaction is L-histidinol + 2 NAD(+) + H2O = L-histidine + 2 NADH + 3 H(+). Its pathway is amino-acid biosynthesis; L-histidine biosynthesis; L-histidine from 5-phospho-alpha-D-ribose 1-diphosphate: step 9/9. Catalyzes the sequential NAD-dependent oxidations of L-histidinol to L-histidinaldehyde and then to L-histidine. This chain is Histidinol dehydrogenase, found in Leptospira biflexa serovar Patoc (strain Patoc 1 / Ames).